A 1135-amino-acid polypeptide reads, in one-letter code: Retinoblastoma-like protein 2 (1135 aa).

The disordered stretch occupies residues 1–43 (MASGGNQSPPPPPAAAASSEEEEEDGDAADRAQPAGSPSHQIQ). At S410 the chain carries Phosphoserine. Phosphothreonine is present on T414. The segment at 414–613 (TPVSTAAHSL…DRIRDNENRV (200 aa)) is domain A. The pocket; binds E1A stretch occupies residues 414-1021 (TPVSTAAHSL…QAFAMKYSQA (608 aa)). A glycan (O-linked (GlcNAc) serine) is linked at S417. The interval 614-824 (PTCEEVMPPQ…PGQPLTSSSI (211 aa)) is spacer. The residue at position 636 (S636) is a Phosphoserine. Residue T639 is modified to Phosphothreonine. A phosphoserine mark is found at S659, S669, S684, S942, S946, S960, S965, and S967. Composition is skewed to polar residues over residues 661–674 (TTLY…TVST), 683–692 (DSPSEGSTSG), 935–950 (SGSS…PTEL), and 958–969 (DSSPVMRSNSTL). Disordered regions lie at residues 661 to 698 (TTLY…PPQP) and 930 to 994 (GKRR…VEEE). A domain B region spans residues 825-1021 (RPRKTSSLAL…QAFAMKYSQA (197 aa)). T968 bears the Phosphothreonine mark. A compositionally biased stretch (pro residues) spans 971-981 (VPQPSSAPPTP). S975 and S976 each carry phosphoserine. A Phosphothreonine modification is found at T980. Phosphoserine is present on residues S1031, S1064, S1076, and S1108.

This sequence belongs to the retinoblastoma protein (RB) family. As to quaternary structure, interacts with AATF and RINT1. Component of the DREAM complex (also named LINC complex) at least composed of E2F4, E2F5, LIN9, LIN37, LIN52, LIN54, MYBL1, MYBL2, RBL1, RBL2, RBBP4, TFDP1 and TFDP2. The complex exists in quiescent cells where it represses cell cycle-dependent genes. It dissociates in S phase when LIN9, LIN37, LIN52 and LIN54 form a subcomplex that binds to MYBL2. Interacts with USP4. Interacts with KMT5B, KMT5C and USP4. Interacts with PML. Interacts with RBBP9. Interacts with CD53. In terms of processing, during G0 and early G1 phase of the cell cycle, phosphorylated on Ser-636 and on 5 sites within the domain B. Phosphorylation on Ser-669 in G1 leads to its ubiquitin-dependent proteolysis.

It localises to the nucleus. Its function is as follows. Key regulator of entry into cell division. Directly involved in heterochromatin formation by maintaining overall chromatin structure and, in particular, that of constitutive heterochromatin by stabilizing histone methylation. Recruits and targets histone methyltransferases KMT5B and KMT5C, leading to epigenetic transcriptional repression. Controls histone H4 'Lys-20' trimethylation. Probably acts as a transcription repressor by recruiting chromatin-modifying enzymes to promoters. Potent inhibitor of E2F-mediated trans-activation, associates preferentially with E2F5. Binds to cyclins A and E. Binds to and may be involved in the transforming capacity of the adenovirus E1A protein. May act as a tumor suppressor. This Mus musculus (Mouse) protein is Retinoblastoma-like protein 2 (Rbl2).